The sequence spans 274 residues: 4-hydroxy-tetrahydrodipicolinate reductase (274 aa).

12 to 17 (GAAGRM) is a binding site for NAD(+). Arg39 serves as a coordination point for NADP(+). Residues 102–104 (GTT) and 126–129 (SGNM) each bind NAD(+). His160 functions as the Proton donor/acceptor in the catalytic mechanism. His161 is a binding site for (S)-2,3,4,5-tetrahydrodipicolinate. Lys164 (proton donor) is an active-site residue. Position 170–171 (170–171 (GT)) interacts with (S)-2,3,4,5-tetrahydrodipicolinate.

This sequence belongs to the DapB family.

It localises to the cytoplasm. The enzyme catalyses (S)-2,3,4,5-tetrahydrodipicolinate + NAD(+) + H2O = (2S,4S)-4-hydroxy-2,3,4,5-tetrahydrodipicolinate + NADH + H(+). It catalyses the reaction (S)-2,3,4,5-tetrahydrodipicolinate + NADP(+) + H2O = (2S,4S)-4-hydroxy-2,3,4,5-tetrahydrodipicolinate + NADPH + H(+). The protein operates within amino-acid biosynthesis; L-lysine biosynthesis via DAP pathway; (S)-tetrahydrodipicolinate from L-aspartate: step 4/4. Functionally, catalyzes the conversion of 4-hydroxy-tetrahydrodipicolinate (HTPA) to tetrahydrodipicolinate. The polypeptide is 4-hydroxy-tetrahydrodipicolinate reductase (Rhizobium rhizogenes (strain K84 / ATCC BAA-868) (Agrobacterium radiobacter)).